A 498-amino-acid polypeptide reads, in one-letter code: ATP synthase subunit beta, chloroplastic (498 aa).

172-179 contacts ATP; that stretch reads GGAGVGKT.

It belongs to the ATPase alpha/beta chains family. F-type ATPases have 2 components, CF(1) - the catalytic core - and CF(0) - the membrane proton channel. CF(1) has five subunits: alpha(3), beta(3), gamma(1), delta(1), epsilon(1). CF(0) has four main subunits: a(1), b(1), b'(1) and c(9-12).

Its subcellular location is the plastid. The protein resides in the chloroplast thylakoid membrane. It carries out the reaction ATP + H2O + 4 H(+)(in) = ADP + phosphate + 5 H(+)(out). Its function is as follows. Produces ATP from ADP in the presence of a proton gradient across the membrane. The catalytic sites are hosted primarily by the beta subunits. The protein is ATP synthase subunit beta, chloroplastic of Agrostis stolonifera (Creeping bentgrass).